Consider the following 400-residue polypeptide: Coiled-coil domain-containing glutamate-rich protein 1 (400 aa).

Over residues 1-11 (MTQTVNEREDP) the composition is skewed to basic and acidic residues. Disordered regions lie at residues 1 to 68 (MTQT…IPGP), 134 to 164 (RPPG…PPID), and 203 to 353 (QEKL…DKFL). A compositionally biased stretch (basic residues) spans 31-45 (YHRRQRGAPMSKRRY). Residues 46–57 (RDGPKTEYEAPR) are compositionally biased toward basic and acidic residues. Positions 137-157 (GRKKRWGRRGRGLRRHPRRSF) are enriched in basic residues. Low complexity predominate over residues 209 to 220 (QQAALRAHQAQA). A compositionally biased stretch (polar residues) spans 255-271 (PSLTFSPAPGQQNQSPT). Residues 275-347 (VEEEEKNVDD…EAGLEEGEQR (73 aa)) are compositionally biased toward acidic residues. A coiled-coil region spans residues 299–335 (EEEEVDGESEDEDVDEEEVEEAGNGEEREEDQEEEDV).

It localises to the nucleus. Regulator of histone epigenetic modifications and chromatin compaction into the sperm head, required for histone-to-protamine (HTP) transition. HTP is a key event in which somatic histones are first replaced by testis-specific histone variants, then transition proteins (TNPs) are incorporated into the spermatid nucleus, and finally protamines (PRMs) replace the TNPs to promote chromatin condensation. This Rattus norvegicus (Rat) protein is Coiled-coil domain-containing glutamate-rich protein 1 (Ccer1).